The primary structure comprises 404 residues: CinA-like protein (404 aa).

This sequence belongs to the CinA family.

This is CinA-like protein from Deinococcus radiodurans (strain ATCC 13939 / DSM 20539 / JCM 16871 / CCUG 27074 / LMG 4051 / NBRC 15346 / NCIMB 9279 / VKM B-1422 / R1).